Consider the following 265-residue polypeptide: Oxidoreductase nsrR (265 aa).

The protein belongs to the avfA family.

It participates in secondary metabolite biosynthesis. Oxidoreductase; part of the gene cluster that mediates the biosynthesis of the tetrahydroxanthone dimer neosartorin, which exhibits antibacterial activity. The two different monomeric units appear to be synthesized by the same set of enzymes, among which the Baeyer-Villiger monooxygenase nsrF is the key enzyme for the divergence of the biosynthetic routes. The pathway begins with the synthesis of atrochrysone thioester by the polyketide synthase nsrB. The atrochrysone carboxyl ACP thioesterase nsrC then breaks the thioester bond and releases the atrochrysone carboxylic acid from AacuL. Atrochrysone carboxylic acid is decarboxylated by the decarboxylase nsrE, and oxidized by the anthrone oxygenase nsrD to yield emodin. Emodin is then reduced to emodin hydroquinone by the oxidoreductase nsrR. A-ring reduction by the short chain dehydrogenase nsrJ, dehydration by the scytalone dehydratase-like protein nsrI and probable spontaneous re-oxidation, results in overall deoxygenation to chrysophanol. The Baeyer-Villiger monooxygenase nsrF accepts chrysophanol as a substrate to insert one oxygen atom at two different positions to yield the precursors of both monomric units. NsrF is promiscuous/flexible in interacting with the 2 (non methylated and methylated) aromatic rings of chrysophanol, thus diverging the biosynthetic pathway at this point. After the hydrolysis of the lactones, methylesterification by the methyltransferase nsrG yields respectively moniliphenone and 2,2',6'-trihydroxy-4-methyl-6-methoxya-cyldiphenylmethanone. The next steps are the hydroxylation by the FAD-dependent monooxygenase nsrK, followed by isomerization by the monooxygenase nsrQ. The short chain dehydrogenase/reductase nsrO then catalyzes the C-5 ketoreduction to give the xanthone skeleton of blennolide C and 5-acetylblennolide A. The acetyltransferase nsrL has a strict substrate specificity and uses only blennolide A but not blennolide C to yield 5-acetylblennolide A as the single-acetylated product. In the final step of the biosynthesis, the heterodimerization of the 2 xanthones, blennolide C and 5-acetylblennolide A, is catalyzed by the cytochrome P450 monooxygenase nsrP. NsrP can utilize at least three different xanthones as its substrates to perform the dimerization reaction. The chain is Oxidoreductase nsrR from Aspergillus novofumigatus (strain IBT 16806).